Here is a 221-residue protein sequence, read N- to C-terminus: Endo-1,4-beta-xylanase 11A (221 aa).

Residues 1–17 (MVSFTTLLTAVATAVSA) form the signal peptide. The GH11 domain occupies 28 to 218 (RGIQPGTGVH…SSGSAEIEVR (191 aa)). An N-linked (GlcNAc...) asparagine glycan is attached at N89. The Nucleophile role is filled by E113. The active-site Proton donor is E205.

The protein belongs to the glycosyl hydrolase 11 (cellulase G) family.

Its subcellular location is the secreted. It carries out the reaction Endohydrolysis of (1-&gt;4)-beta-D-xylosidic linkages in xylans.. It participates in glycan degradation; xylan degradation. With respect to regulation, retains an activity of 52.5% in the presence of 5 mM SDS. Its function is as follows. Endo-1,4-beta-xylanase involved in the hydrolysis of xylan, a major structural heterogeneous polysaccharide found in plant biomass representing the second most abundant polysaccharide in the biosphere, after cellulose. Is an alkali-tolerant enzyme, exhibiting 50.6% of activity at pH 9.0, and 26.9% even at pH 10.0. The sequence is that of Endo-1,4-beta-xylanase 11A from Humicola insolens (Soft-rot fungus).